The chain runs to 715 residues: L-type lectin-domain containing receptor kinase VIII.1 (715 aa).

A signal peptide spans 1-21; the sequence is MSLFLSFFISILLCFFNGATT. Residues 22 to 247 are legume-lectin like; it reads TQFDFSTLAI…IHSIEWWSFS (226 aa). Residues 22–317 are Extracellular-facing; sequence TQFDFSTLAI…SRFCKENPGT (296 aa). 2 N-linked (GlcNAc...) asparagine glycosylation sites follow: Asn126 and Asn195. Positions 255 to 296 are disordered; the sequence is GSGSGSPPPRANLMNPKANSVKSPPPLASQPSSSAIPISSNT. The span at 283–296 shows a compositional bias: low complexity; sequence SQPSSSAIPISSNT. Residues 318-338 form a helical membrane-spanning segment; that stretch reads IAGVVTAGAFFLALFAGALFW. Residues 339–715 lie on the Cytoplasmic side of the membrane; sequence VYSKKFKRVE…IIRSDDDHLV (377 aa). Positions 376-676 constitute a Protein kinase domain; sequence FNESRIIGHG…MSFSTSHLLL (301 aa). Residues 382–390 and Lys405 contribute to the ATP site; that span reads IGHGAFGVV. Asp500 functions as the Proton acceptor in the catalytic mechanism.

The protein in the C-terminal section; belongs to the protein kinase superfamily. Ser/Thr protein kinase family. This sequence in the N-terminal section; belongs to the leguminous lectin family.

It localises to the cell membrane. The catalysed reaction is L-seryl-[protein] + ATP = O-phospho-L-seryl-[protein] + ADP + H(+). It carries out the reaction L-threonyl-[protein] + ATP = O-phospho-L-threonyl-[protein] + ADP + H(+). The protein is L-type lectin-domain containing receptor kinase VIII.1 (LECRK81) of Arabidopsis thaliana (Mouse-ear cress).